Consider the following 100-residue polypeptide: Urease subunit gamma (100 aa).

The protein belongs to the urease gamma subunit family. As to quaternary structure, heterotrimer of UreA (gamma), UreB (beta) and UreC (alpha) subunits. Three heterotrimers associate to form the active enzyme.

The protein resides in the cytoplasm. It catalyses the reaction urea + 2 H2O + H(+) = hydrogencarbonate + 2 NH4(+). It functions in the pathway nitrogen metabolism; urea degradation; CO(2) and NH(3) from urea (urease route): step 1/1. The protein is Urease subunit gamma of Allorhizobium ampelinum (strain ATCC BAA-846 / DSM 112012 / S4) (Agrobacterium vitis (strain S4)).